A 252-amino-acid polypeptide reads, in one-letter code: Phosphate import ATP-binding protein PstB (252 aa).

An ABC transporter domain is found at 5–247 (MRGQDVKVFY…PKEQRTQDYI (243 aa)). 37-44 (GPSGCGKS) contributes to the ATP binding site.

This sequence belongs to the ABC transporter superfamily. Phosphate importer (TC 3.A.1.7) family. The complex is composed of two ATP-binding proteins (PstB), two transmembrane proteins (PstC and PstA) and a solute-binding protein (PstS).

Its subcellular location is the cell inner membrane. The enzyme catalyses phosphate(out) + ATP + H2O = ADP + 2 phosphate(in) + H(+). Part of the ABC transporter complex PstSACB involved in phosphate import. Responsible for energy coupling to the transport system. This is Phosphate import ATP-binding protein PstB from Bartonella quintana (strain Toulouse) (Rochalimaea quintana).